A 234-amino-acid polypeptide reads, in one-letter code: Sugar fermentation stimulation protein A (234 aa).

A DNA-binding region (H-T-H motif) is located at residues 201–220 (LLSEAQNKGVEVLAYKAELS).

This sequence belongs to the SfsA family.

Binds to DNA non-specifically. Could be a regulatory factor involved in maltose metabolism. The protein is Sugar fermentation stimulation protein A of Salmonella gallinarum (strain 287/91 / NCTC 13346).